Reading from the N-terminus, the 191-residue chain is Peptidyl-tRNA hydrolase (191 aa).

Tyr17 contacts tRNA. The active-site Proton acceptor is the His22. TRNA contacts are provided by Tyr68, Asn70, and Asn116.

This sequence belongs to the PTH family. Monomer.

It localises to the cytoplasm. The catalysed reaction is an N-acyl-L-alpha-aminoacyl-tRNA + H2O = an N-acyl-L-amino acid + a tRNA + H(+). Its function is as follows. Hydrolyzes ribosome-free peptidyl-tRNAs (with 1 or more amino acids incorporated), which drop off the ribosome during protein synthesis, or as a result of ribosome stalling. Catalyzes the release of premature peptidyl moieties from peptidyl-tRNA molecules trapped in stalled 50S ribosomal subunits, and thus maintains levels of free tRNAs and 50S ribosomes. In Mycobacterium tuberculosis (strain ATCC 25177 / H37Ra), this protein is Peptidyl-tRNA hydrolase.